A 508-amino-acid polypeptide reads, in one-letter code: 6-phosphogluconate dehydrogenase, decarboxylating 2, chloroplastic (508 aa).

The transit peptide at 1 to 12 (MASPAPAPPAAS) directs the protein to the chloroplast. NADP(+) is bound by residues 28-33 (GLATMG), 51-53 (NRT), 95-97 (VQA), and Asn123. Residues Asn123 and 149–151 (SGG) each bind substrate. Lys203 (proton acceptor) is an active-site residue. 206–207 (HN) contacts substrate. The Proton donor role is filled by Glu210. Positions 211, 284, 311, 475, and 481 each coordinate substrate.

Belongs to the 6-phosphogluconate dehydrogenase family. Homodimer.

It is found in the plastid. Its subcellular location is the chloroplast. The enzyme catalyses 6-phospho-D-gluconate + NADP(+) = D-ribulose 5-phosphate + CO2 + NADPH. The protein operates within carbohydrate degradation; pentose phosphate pathway; D-ribulose 5-phosphate from D-glucose 6-phosphate (oxidative stage): step 3/3. Catalyzes the oxidative decarboxylation of 6-phosphogluconate to ribulose 5-phosphate and CO(2), with concomitant reduction of NADP to NADPH. This chain is 6-phosphogluconate dehydrogenase, decarboxylating 2, chloroplastic (G6PGH2), found in Oryza sativa subsp. japonica (Rice).